A 444-amino-acid polypeptide reads, in one-letter code: Trigger factor (444 aa).

The PPIase FKBP-type domain occupies 165–250 (GDFAKFDFEG…LHEIQELKIP (86 aa)).

This sequence belongs to the FKBP-type PPIase family. Tig subfamily.

It is found in the cytoplasm. The enzyme catalyses [protein]-peptidylproline (omega=180) = [protein]-peptidylproline (omega=0). Functionally, involved in protein export. Acts as a chaperone by maintaining the newly synthesized protein in an open conformation. Functions as a peptidyl-prolyl cis-trans isomerase. In Campylobacter jejuni subsp. jejuni serotype O:2 (strain ATCC 700819 / NCTC 11168), this protein is Trigger factor (tig).